The following is a 483-amino-acid chain: Glycogen synthase (483 aa).

An ADP-alpha-D-glucose-binding site is contributed by lysine 15.

This sequence belongs to the glycosyltransferase 1 family. Bacterial/plant glycogen synthase subfamily.

The enzyme catalyses [(1-&gt;4)-alpha-D-glucosyl](n) + ADP-alpha-D-glucose = [(1-&gt;4)-alpha-D-glucosyl](n+1) + ADP + H(+). It functions in the pathway glycan biosynthesis; glycogen biosynthesis. Synthesizes alpha-1,4-glucan chains using ADP-glucose. This is Glycogen synthase from Desulfatibacillum aliphaticivorans.